The primary structure comprises 120 residues: MFLLYEYDIFWAFLIISSAIPFLAFLISGILSPIRKGPEKLSSYESGIEPIGDAWLQFRIRYYMFALVFVVFDVETVFLYPWAMSFDVLGVSAFIEAFIFVLILILGLVYAWRKGALEWS.

The next 3 helical transmembrane spans lie at I9–G29, M64–M84, and V88–L108.

Belongs to the complex I subunit 3 family. NDH is composed of at least 16 different subunits, 5 of which are encoded in the nucleus.

It is found in the plastid. The protein resides in the chloroplast thylakoid membrane. The catalysed reaction is a plastoquinone + NADH + (n+1) H(+)(in) = a plastoquinol + NAD(+) + n H(+)(out). It carries out the reaction a plastoquinone + NADPH + (n+1) H(+)(in) = a plastoquinol + NADP(+) + n H(+)(out). Its function is as follows. NDH shuttles electrons from NAD(P)H:plastoquinone, via FMN and iron-sulfur (Fe-S) centers, to quinones in the photosynthetic chain and possibly in a chloroplast respiratory chain. The immediate electron acceptor for the enzyme in this species is believed to be plastoquinone. Couples the redox reaction to proton translocation, and thus conserves the redox energy in a proton gradient. The sequence is that of NAD(P)H-quinone oxidoreductase subunit 3, chloroplastic from Aethionema cordifolium (Lebanon stonecress).